A 330-amino-acid chain; its full sequence is Fructose-1,6-bisphosphatase class 1 (330 aa).

Residues Glu-84, Asp-103, Leu-105, and Asp-106 each coordinate Mg(2+). Substrate contacts are provided by residues 106 to 109 (DGSS), Asn-196, and Lys-262. Glu-268 contributes to the Mg(2+) binding site.

The protein belongs to the FBPase class 1 family. As to quaternary structure, homotetramer. Mg(2+) serves as cofactor.

It localises to the cytoplasm. The catalysed reaction is beta-D-fructose 1,6-bisphosphate + H2O = beta-D-fructose 6-phosphate + phosphate. It participates in carbohydrate biosynthesis; gluconeogenesis. This is Fructose-1,6-bisphosphatase class 1 from Shewanella putrefaciens (strain CN-32 / ATCC BAA-453).